Reading from the N-terminus, the 515-residue chain is Cytochrome P450 monooxygenase ptmJ (515 aa).

4 helical membrane passes run 6–26 (LGPF…LFVI), 50–70 (LGVV…LFCV), 82–102 (VFYL…EPVV), and 300–320 (VIIL…LFLH). A heme-binding site is contributed by Cys449.

Belongs to the cytochrome P450 family. It depends on heme as a cofactor.

It is found in the membrane. The protein operates within secondary metabolite biosynthesis. Cytochrome P450 monooxygenase; part of the gene cluster that mediates the biosynthesis of the indole diterpenes penitrems. The geranylgeranyl diphosphate (GGPP) synthase ptmG catalyzes the first step in penitrem biosynthesis via conversion of farnesyl pyrophosphate and isopentyl pyrophosphate into geranylgeranyl pyrophosphate (GGPP). Condensation of indole-3-glycerol phosphate with GGPP by the prenyl transferase ptmC then forms 3-geranylgeranylindole (3-GGI). Epoxidation by the FAD-dependent monooxygenase ptmM leads to a epoxidized-GGI that is substrate of the terpene cyclase ptmB for cyclization to yield paspaline. Paspaline is subsequently converted to 13-desoxypaxilline by the cytochrome P450 monooxygenase ptmP, the latter being then converted to paxilline by the cytochrome P450 monooxygenase ptmQ. Paxilline is converted to beta-paxitriol via C-10 ketoreduction by the short-chain dehydrogenase ptmH which can be monoprenylated at the C-20 by the indole diterpene prenyltransferase ptmD. A two-step elimination (acetylation and elimination) process performed by the O-acetyltransferase ptmV and ptmI leads to the production of the prenylated form of penijanthine. The FAD-linked oxidoreductase ptmO then converts the prenylated form of penijanthine into PC-M5 which is in turn transformed into PC-M4 by the aromatic dimethylallyltransferase ptmE. Five sequential oxidative transformations performed by the cytochrome P450 monooxygenases ptmK, ptmU, ptmL, ptmN and ptmJ yield the various penitrem compounds. PtmK, ptmU and ptmM are involved in the formation of the key bicyclic ring of penitrem C via the formation of the intermediates secopenitrem D and penitrem D. PtmL catalyzes the epoxidation of penitrem D and C to yield penitrem B and F, respectively. PtmJ catalyzes the last benzylic hydroxylation to convert penitrem B to prenitrem E and penitrem F to penitrem A. This chain is Cytochrome P450 monooxygenase ptmJ, found in Penicillium ochrochloron.